The primary structure comprises 977 residues: Serine/threonine-protein kinase/endoribonuclease IRE1 (977 aa).

An N-terminal signal peptide occupies residues 1-18; sequence MPARRLLLLLTLLLPGLG. Residues 19 to 443 are Lumenal-facing; sequence IFGSTSTVTL…EAPVDSMLKD (425 aa). The N-linked (GlcNAc...) asparagine glycan is linked to Asn176. The span at 410–419 shows a compositional bias: polar residues; that stretch reads TSENAPTTVS. Positions 410-434 are disordered; it reads TSENAPTTVSRDVEEKPAHAPARPE. A helical membrane pass occupies residues 444–464; sequence MATIILSTFLLIGWVAFIITY. Over 465–977 the chain is Cytoplasmic; it reads PLSMHQQQQL…PQPPVTPDAL (513 aa). The interval 491–559 is disordered; it reads QQQQQLPFHP…PSLEQDDGDE (69 aa). Residues 513–552 are compositionally biased toward low complexity; the sequence is TSGPYSESSGTSSPSTSPRASNHSLCSGSSASKAGSSPSL. The 262-residue stretch at 571–832 folds into the Protein kinase domain; the sequence is FCPKDVLGHG…AKHVLKHPFF (262 aa). ATP is bound by residues 577 to 585, Lys599, and 643 to 645; these read LGHGAEGTI and ELC. Residue Asp688 is the Proton acceptor of the active site. Residues 690–693 and Asp711 contribute to the ATP site; that span reads KPHN. Phosphoserine is present on residues Ser724 and Ser729. The 129-residue stretch at 835–963 folds into the KEN domain; it reads LEKQLQFFQD…ERLFQPYYFH (129 aa). Positions 906-907 are interacts with hydroxy-aryl-aldehyde inhibitors; it reads NK. Position 973 is a phosphothreonine (Thr973).

Belongs to the protein kinase superfamily. Ser/Thr protein kinase family. As to quaternary structure, monomer. Homodimer; disulfide-linked; homodimerization takes place in response to endoplasmic reticulum stress and promotes activation of the kinase and endoribonuclease activities. Dimer formation is driven by hydrophobic interactions within the N-terminal luminal domains and stabilized by disulfide bridges. Interacts (via the luminal region) with DNAJB9/ERdj4; interaction takes place in unstressed cells and promotes recruitment of HSPA5/BiP. Interacts (via the luminal region) with HSPA5/BiP; HSPA5/BiP is a negative regulator of the unfolded protein response (UPR) that prevents homodimerization of ERN1/IRE1 and subsequent activation of the protein. Interaction with HSPA5 also competitively inhibits ERN1 interaction with MANF. Interacts with PDIA6, a negative regulator of the UPR; the interaction is direct and disrupts homodimerization. Interacts with DAB2IP (via PH domain); the interaction occurs in a endoplasmic reticulum stress-induced dependent manner and is required for subsequent recruitment of TRAF2 to ERN1/IRE1. Interacts with TAOK3 and TRAF2. Interacts with RNF13. Interacts with LACC1. Interacts (when unphosphorylated) with DDRGK1; interaction is dependent on UFM1 and takes place in response to endoplasmic reticulum stress, regulating ERN1/IRE1-alpha stability. Interacts (via N-terminus) with P4HB/PDIA1; the interaction is enhanced by phosphorylation of P4HB by FAM20C in response to endoplasmic reticulum stress and results in attenuation of ERN1 activity. Interacts with TMBIM6; this interaction inhibits ERN1 activity. Interacts (via luminal domain) with MANF (via C-terminus); the interaction is decreased in the presence of increasing concentrations of Ca(2+). Mg(2+) serves as cofactor. Autophosphorylated following homodimerization. Autophosphorylation promotes activation of the endoribonuclease domain. In response to ER stress, phosphorylated at Ser-724, Ser-729 and possibly Ser-726; phosphorylation promotes oligomerization and endoribonuclease activity. Dephosphorylated at Ser-724, Ser-729 and possibly Ser-726 by RPAP2 to abort failed ER-stress adaptation and trigger apoptosis. Phosphorylated at Ser-724; in response to the ER stressor tunicamycin. In terms of processing, ADP-ribosylated by PARP16 upon ER stress, which increases both kinase and endonuclease activities. In terms of tissue distribution, ubiquitously expressed. High levels observed in pancreatic tissue.

It is found in the endoplasmic reticulum membrane. It catalyses the reaction L-seryl-[protein] + ATP = O-phospho-L-seryl-[protein] + ADP + H(+). The enzyme catalyses L-threonyl-[protein] + ATP = O-phospho-L-threonyl-[protein] + ADP + H(+). With respect to regulation, the kinase domain is activated by trans-autophosphorylation following homodimerization. Kinase activity is required for activation of the endoribonuclease domain. Endoribonuclease activity is specifically inhibited by hydroxy-aryl-aldehydes (HAA). Functionally, serine/threonine-protein kinase and endoribonuclease that acts as a key sensor for the endoplasmic reticulum unfolded protein response (UPR). In unstressed cells, the endoplasmic reticulum luminal domain is maintained in its inactive monomeric state by binding to the endoplasmic reticulum chaperone HSPA5/BiP. Accumulation of misfolded proteins in the endoplasmic reticulum causes release of HSPA5/BiP, allowing the luminal domain to homodimerize, promoting autophosphorylation of the kinase domain and subsequent activation of the endoribonuclease activity. The endoribonuclease activity is specific for XBP1 mRNA and excises 26 nucleotides from XBP1 mRNA. The resulting spliced transcript of XBP1 encodes a transcriptional activator protein that up-regulates expression of UPR target genes. Acts as an upstream signal for ER stress-induced GORASP2-mediated unconventional (ER/Golgi-independent) trafficking of CFTR to cell membrane by modulating the expression and localization of SEC16A. The chain is Serine/threonine-protein kinase/endoribonuclease IRE1 from Homo sapiens (Human).